The primary structure comprises 240 residues: Protein unc-119 homolog A (240 aa).

The segment covering Met-1 to Thr-12 has biased composition (gly residues). Positions Met-1–Gly-61 are disordered. Residues Gly-13 to Pro-23 are compositionally biased toward low complexity. Phosphoserine; by CK2 is present on residues Ser-37, Ser-39, and Ser-41. Residue Tyr-131 participates in tetradecanoate binding.

It belongs to the PDE6D/unc-119 family. As to quaternary structure, interacts with CABP4; in the absence of calcium. May interact with GTP-bound ARL1. Interacts with ARL2 and ARL3 (GTP-bound forms); this promotes the release of myristoylated cargo proteins. Found in a complex with ARL3, RP2 and UNC119; RP2 induces hydrolysis of GTP ARL3 in the complex, leading to the release of UNC119. Interacts with NPHP3 (when myristoylated). Interacts with CYS1 (when myristoylated). Interacts with MACIR; interaction only takes place when UNC119 is not liganded with myristoylated proteins. Interacts with LCK; this interaction plays a crucial role in activation of LCK. Interacts with FYN. Interacts with RAB11A; in a cell cycle-dependent manner. Interacts with LYN (via SH2 and SH3 domains); leading to LYN activation. Interacts with DNM1; leading to a decrease of DNM1 GTPase activity. Found in a complex with ABL1, ABL2, CRK and UNC119; leading to the inhibition of CRK phosphorylation by ABL kinases. Interacts with CD44. Interacts with KLHL18 (via kelch repeats). Interacts with PPP3CA, PPP3CB and PPP3CC. Interacts with USP48; this interaction promotes UNC119 stability. Phosphorylation suppresses its interaction with KLHL18 and down-regulates its KLHL18-mediated degradation. Phosphorylated more under light conditions than dark conditions. Dephosphorylated by calcineurin.

It localises to the cytoplasm. Its subcellular location is the cytoskeleton. The protein resides in the microtubule organizing center. The protein localises to the centrosome. It is found in the spindle. It localises to the spindle pole. In terms of biological role, involved in synaptic functions in photoreceptor cells, the signal transduction in immune cells as a Src family kinase activator, endosome recycling, the uptake of bacteria and endocytosis, protein trafficking in sensory neurons and as lipid-binding chaperone with specificity for a diverse subset of myristoylated proteins. Specifically binds the myristoyl moiety of a subset of N-terminally myristoylated proteins and is required for their localization. Binds myristoylated GNAT1 and is required for G-protein localization and trafficking in sensory neurons. Probably plays a role in trafficking proteins in photoreceptor cells. Plays important roles in mediating Src family kinase signals for the completion of cytokinesis via RAB11A. The chain is Protein unc-119 homolog A (UNC119) from Canis lupus familiaris (Dog).